The following is an 88-amino-acid chain: Putative regulatory protein Ava_1474 (88 aa).

The protein belongs to the RemA family.

The sequence is that of Putative regulatory protein Ava_1474 from Trichormus variabilis (strain ATCC 29413 / PCC 7937) (Anabaena variabilis).